Consider the following 356-residue polypeptide: Chitin elicitor-binding protein (356 aa).

The first 28 residues, 1–28 (MASLTAALATPAAAALLLLVLLAAPASA), serve as a signal peptide directing secretion. N-linked (GlcNAc...) asparagine glycosylation is present at Asn-30. 4 disulfides stabilise this stretch: Cys-33–Cys-100, Cys-41–Cys-164, Cys-98–Cys-162, and Cys-100–Cys-164. Position 50–51 (50–51 (PN)) interacts with chitin. N-linked (GlcNAc...) asparagine glycans are attached at residues Asn-63 and Asn-89. 2 LysM domains span residues 111–158 (PIYV…TLWI) and 175–219 (LAYS…ILDV). Chitin is bound by residues 117-123 (PQDGLDA), Asn-142, 145-152 (PDPNKINV), Thr-155, and Gly-182. Asn-151 is a glycosylation site (N-linked (GlcNAc...) asparagine). N-linked (GlcNAc...) asparagine glycosylation occurs at Asn-184. Chitin-binding positions include Ser-186 and 211 to 213 (LQM). 2 disulfide bridges follow: Cys-224–Cys-257 and Cys-252–Cys-274. Asn-265, Asn-281, Asn-290, Asn-306, and Asn-319 each carry an N-linked (GlcNAc...) asparagine glycan. A helical transmembrane segment spans residues 336–356 (RSMWSMSVISFHMVLIIICFL).

Forms homooligomer. Interacts with CERK1. Binds to chitin oligosaccharide elicitor. Interacts with LYP4 and LYP6. In terms of processing, N-glycosylated. Expressed in seedlings, roots, shoots, stems and flowers.

Its subcellular location is the cell membrane. Chitin elicitor-binding protein involved in the perception and transduction of chitin oligosaccharide elicitor signal for defense responses. In Oryza sativa subsp. japonica (Rice), this protein is Chitin elicitor-binding protein.